Here is a 1977-residue protein sequence, read N- to C-terminus: Echinoderm microtubule-associated protein-like 5 (1977 aa).

11 WD repeats span residues 59 to 100 (GHSD…TVSV), 104 to 145 (VHTH…MLSM), 148 to 187 (GHTDRIFDISWDLYQPNKLVSCGVKHIKFWSLCGNALTPK), 195 to 233 (GDLQTILCLACARDELTYSGALNGDIYVWKGINLIRTIQ), 235 to 273 (AHTAGIFSMNACEEGFATGGRDGCIRLWDLTFKPITVID), 280 to 321 (GYKG…LIMQ), 323 to 362 (HCEGELWALAVHPTKPLAVTGSDDRSVRIWSLVDHALIAR), 364 to 403 (NMDEPIRCAAVNADGVHLALGMKDGSLTVLRVRDMTEVVH), 406 to 445 (DRKEAIHELKYSPDGTYLAVGCNDSSVDIYGVAQRYKKVG), 449 to 488 (GSLSFITHLDWSSDSKYLQTNDGSGKRLLYKMPGGKEVTS), and 561 to 601 (GHSA…KLKD). Residues 609 to 629 (ESLTESNSDESDSDLSDVPEL) are disordered. The segment covering 615-629 (NSDESDSDLSDVPEL) has biased composition (acidic residues). WD repeat units lie at residues 725-766 (GHDD…PLSI), 770-811 (YHQY…KLSV), 814-853 (GSKDKIFVVKMNPYVPDKLITAGIKHMKFWRRAGGGLIGR), 861-900 (GKNDTMMCAVYGWTEEMAFSGTSTGDVCIWRDVFLVKTVK), 901-940 (AHDGPVFSMHALEKGFVTGGKDGVVALWDDSFERCLKTYA), 996-1035 (HMEGEVWGLATHPYLPICATVSDDKTLRIWDLSPSHCMLA), 1038-1077 (KLKKGGRCCCFSPDGKALAVGLNDGSFLMANADTLEDLVS), 1080-1120 (HRKD…RVGV), and 1236-1276 (AHST…HREK). 2 disordered regions span residues 1274-1299 (REKKNCDSEESDTDSEEDGGYDSDVT) and 1323-1363 (PHLQ…NVGK). The span at 1281 to 1294 (SEESDTDSEEDGGY) shows a compositional bias: acidic residues. Residues 1326-1337 (QQKEPSVDERQG) show a composition bias toward basic and acidic residues. WD repeat units follow at residues 1420-1471 (EHND…TLSI), 1475-1516 (SHSK…KIAS), 1519-1558 (GHNQRIFVAEFRPDSDTQFVSVGIKHVKFWTLAGRALLSK), 1568-1606 (ARMQTMLAVAFGANNLTFTGTISGDVCVWKDHILCRVVA), 1608-1654 (AHNG…RAFR), 1699-1739 (GHVD…MLNK), 1741-1782 (NLGH…GKKR), 1783-1822 (DRRCAIHDIRFSPDSRYLAVGSSENSVDFYDLTLGPTLNR), 1895-1934 (AEKADVTCACVSHSGISLVTGDDFGMVKLYDFPCPEKFAK), and 1940-1977 (GHSPHVTNIRFTSGDRHVVSAGGDDCSVFVWKCVHTPH).

This sequence belongs to the WD repeat EMAP family. In terms of tissue distribution, highly expressed in brain, especially in hippocampus, cerebellum and olfactory bulb (at protein level).

It is found in the cytoplasm. It localises to the cytoskeleton. In terms of biological role, may modify the assembly dynamics of microtubules, such that microtubules are slightly longer, but more dynamic. In Rattus norvegicus (Rat), this protein is Echinoderm microtubule-associated protein-like 5 (Eml5).